The following is a 311-amino-acid chain: HPr kinase/phosphorylase (311 aa).

Catalysis depends on residues His138 and Lys159. Gly153–Ser160 contacts ATP. Residue Ser160 coordinates Mg(2+). Residue Asp177 is the Proton acceptor; for phosphorylation activity. Proton donor; for dephosphorylation activity of the active site. The tract at residues Leu201 to Asp210 is important for the catalytic mechanism of both phosphorylation and dephosphorylation. Glu202 is a Mg(2+) binding site. Arg243 is an active-site residue. Positions Pro264 to Arg269 are important for the catalytic mechanism of dephosphorylation.

This sequence belongs to the HPrK/P family. In terms of assembly, homohexamer. Requires Mg(2+) as cofactor.

The catalysed reaction is [HPr protein]-L-serine + ATP = [HPr protein]-O-phospho-L-serine + ADP + H(+). It carries out the reaction [HPr protein]-O-phospho-L-serine + phosphate + H(+) = [HPr protein]-L-serine + diphosphate. Its function is as follows. Catalyzes the ATP- as well as the pyrophosphate-dependent phosphorylation of a specific serine residue in HPr, a phosphocarrier protein of the phosphoenolpyruvate-dependent sugar phosphotransferase system (PTS). HprK/P also catalyzes the pyrophosphate-producing, inorganic phosphate-dependent dephosphorylation (phosphorolysis) of seryl-phosphorylated HPr (P-Ser-HPr). The two antagonistic activities of HprK/P are regulated by several intracellular metabolites, which change their concentration in response to the absence or presence of rapidly metabolisable carbon sources (glucose, fructose, etc.) in the growth medium. Therefore, by controlling the phosphorylation state of HPr, HPrK/P is a sensor enzyme that plays a major role in the regulation of carbon metabolism and sugar transport: it mediates carbon catabolite repression (CCR), and regulates PTS-catalyzed carbohydrate uptake and inducer exclusion. This Streptococcus gordonii (strain Challis / ATCC 35105 / BCRC 15272 / CH1 / DL1 / V288) protein is HPr kinase/phosphorylase.